The chain runs to 529 residues: Bifunctional purine biosynthesis protein PurH (529 aa).

Residues 1–148 (MNNARPIRRA…KNHKDTTIIV (148 aa)) form the MGS-like domain.

This sequence belongs to the PurH family.

It catalyses the reaction (6R)-10-formyltetrahydrofolate + 5-amino-1-(5-phospho-beta-D-ribosyl)imidazole-4-carboxamide = 5-formamido-1-(5-phospho-D-ribosyl)imidazole-4-carboxamide + (6S)-5,6,7,8-tetrahydrofolate. It carries out the reaction IMP + H2O = 5-formamido-1-(5-phospho-D-ribosyl)imidazole-4-carboxamide. Its pathway is purine metabolism; IMP biosynthesis via de novo pathway; 5-formamido-1-(5-phospho-D-ribosyl)imidazole-4-carboxamide from 5-amino-1-(5-phospho-D-ribosyl)imidazole-4-carboxamide (10-formyl THF route): step 1/1. It participates in purine metabolism; IMP biosynthesis via de novo pathway; IMP from 5-formamido-1-(5-phospho-D-ribosyl)imidazole-4-carboxamide: step 1/1. This chain is Bifunctional purine biosynthesis protein PurH, found in Shewanella pealeana (strain ATCC 700345 / ANG-SQ1).